A 93-amino-acid polypeptide reads, in one-letter code: MKTLVLLSALVLLAFQVQADPIQNTDEETKTEEQPGEDDQAVSVSFGDPEGSSLQEESLRDLVCYCRKRGCKRRERMNGTCRKGHLMYTLCCR.

A signal peptide spans 1 to 16 (MKTLVLLSALVLLAFQ). Positions 17-58 (VQADPIQNTDEETKTEEQPGEDDQAVSVSFGDPEGSSLQEES) are excised as a propeptide. The segment at 22 to 56 (IQNTDEETKTEEQPGEDDQAVSVSFGDPEGSSLQE) is disordered. Disulfide bonds link Cys-64-Cys-92, Cys-66-Cys-81, and Cys-71-Cys-91.

It belongs to the alpha-defensin family. In terms of tissue distribution, paneth cells of the small bowel.

The protein resides in the secreted. Its function is as follows. Probably contributes to the antimicrobial barrier function of the small bowel mucosa. This chain is Alpha-defensin 3 (Defa3), found in Mus musculus (Mouse).